Here is a 187-residue protein sequence, read N- to C-terminus: MSEDFMLDTDDIERRMDGAISSLKTEFASLRTGRASASMLEPVMVDAYGQRTPINQVGTVNVPEPRMVTINVWDKGLVGKVEKAIRESGLGINPQLNGTIIMLPIPELNEERRRELSKVAGQYAEHARVSIRNIRRDGMDQIKKAKADGLSEDDQKLWEGEVQEITDRYIKGIDDQLATKQAEIMQV.

This sequence belongs to the RRF family.

It is found in the cytoplasm. Its function is as follows. Responsible for the release of ribosomes from messenger RNA at the termination of protein biosynthesis. May increase the efficiency of translation by recycling ribosomes from one round of translation to another. The polypeptide is Ribosome-recycling factor (Roseobacter denitrificans (strain ATCC 33942 / OCh 114) (Erythrobacter sp. (strain OCh 114))).